The sequence spans 2958 residues: Protein CSF1 (2958 aa).

Residues 1–17 are Cytoplasmic-facing; that stretch reads MEAISQLRGVPLTHQKD. Residues 18–38 traverse the membrane as a helical; Signal-anchor for type II membrane protein segment; sequence FSWVFLVDWILTVVVCLTMIF. Residues 39–2958 lie on the Extracellular side of the membrane; the sequence is YMGRIYAYLV…QYVKILDDTH (2920 aa). N-linked (GlcNAc...) asparagine glycans are attached at residues Asn82, Asn117, Asn144, Asn271, Asn478, Asn530, Asn816, Asn821, Asn839, and Asn892. The tract at residues 813-834 is disordered; the sequence is GYQNSSLKNESEDKGPMKRSDL. A compositionally biased stretch (basic and acidic residues) spans 821-834; the sequence is NESEDKGPMKRSDL. A disordered region spans residues 1175 to 1196; that stretch reads MEPSRASFSEDDNDEEADPSSF. Over residues 1183 to 1192 the composition is skewed to acidic residues; it reads SEDDNDEEAD. Residues Asn1309, Asn1368, Asn1453, Asn1785, Asn1921, Asn2130, Asn2146, Asn2280, Asn2337, Asn2520, Asn2578, Asn2719, and Asn2869 are each glycosylated (N-linked (GlcNAc...) asparagine).

It belongs to the CSF1 family. In terms of assembly, interacts with MCD4; CSF1 channels phosphatidylethanolamine to MCD4 in the endoplasmic reticulum at contact sites to support GPI anchor biosynthesis.

It localises to the cell membrane. Its subcellular location is the endoplasmic reticulum membrane. It is found in the mitochondrion membrane. Tube-forming lipid transport protein which provides phosphatidylethanolamine for glycosylphosphatidylinositol (GPI) anchor synthesis in the endoplasmic reticulum. Required for the glucose and other nutrients uptake at low temperature. In Saccharomyces cerevisiae (strain ATCC 204508 / S288c) (Baker's yeast), this protein is Protein CSF1.